We begin with the raw amino-acid sequence, 307 residues long: Beta-lactamase (307 aa).

The N-terminal stretch at 1 to 26 (MKLWFSTLKLKKAAAVLLFSCVALAG) is a signal peptide. C27 is lipidated: N-palmitoyl cysteine. C27 carries S-diacylglycerol cysteine lipidation. S86 serves as the catalytic Acyl-ester intermediate. The active-site Proton acceptor is E182. 248–250 (KTG) lines the substrate pocket.

The protein belongs to the class-A beta-lactamase family. Post-translationally, large exopenicillinase is the primary secretion product; it can be converted to small exopenicillinase.

It localises to the cell membrane. It carries out the reaction a beta-lactam + H2O = a substituted beta-amino acid. This chain is Beta-lactamase (penP), found in Bacillus licheniformis.